A 161-amino-acid chain; its full sequence is Cytochrome c-type biogenesis protein CcmE (161 aa).

The Cytoplasmic segment spans residues 1–13; sequence MSWLPKSPKARRR. Residues 14–34 traverse the membrane as a helical; Signal-anchor for type II membrane protein segment; it reads LMLVAAIAPVLAVAAGLTLWG. The Periplasmic segment spans residues 35-161; that stretch reads LSDSISFFYT…QRPEHQGDAL (127 aa). Positions 128 and 132 each coordinate heme.

This sequence belongs to the CcmE/CycJ family.

Its subcellular location is the cell inner membrane. In terms of biological role, heme chaperone required for the biogenesis of c-type cytochromes. Transiently binds heme delivered by CcmC and transfers the heme to apo-cytochromes in a process facilitated by CcmF and CcmH. This is Cytochrome c-type biogenesis protein CcmE from Phenylobacterium zucineum (strain HLK1).